Here is a 419-residue protein sequence, read N- to C-terminus: Tyrosine--tRNA ligase (419 aa).

Y34 lines the L-tyrosine pocket. The 'HIGH' region motif lies at 39–48; it reads PSGDSMHIGH. Positions 168 and 172 each coordinate L-tyrosine. Residues 230-234 carry the 'KMSKS' region motif; it reads KFGKS. An ATP-binding site is contributed by K233. In terms of domain architecture, S4 RNA-binding spans 352–418; it reads ANLVDWLVTL…GKKKYFLVSY (67 aa).

Belongs to the class-I aminoacyl-tRNA synthetase family. TyrS type 1 subfamily. Homodimer.

The protein localises to the cytoplasm. It catalyses the reaction tRNA(Tyr) + L-tyrosine + ATP = L-tyrosyl-tRNA(Tyr) + AMP + diphosphate + H(+). Functionally, catalyzes the attachment of tyrosine to tRNA(Tyr) in a two-step reaction: tyrosine is first activated by ATP to form Tyr-AMP and then transferred to the acceptor end of tRNA(Tyr). This chain is Tyrosine--tRNA ligase, found in Listeria monocytogenes serotype 4a (strain HCC23).